The primary structure comprises 277 residues: Shikimate dehydrogenase (NADP(+)) (277 aa).

Shikimate contacts are provided by residues 20 to 22 and Thr-67; that span reads SLS. Lys-71 functions as the Proton acceptor in the catalytic mechanism. Asp-83 contributes to the NADP(+) binding site. Residues Asn-92 and Asp-107 each contribute to the shikimate site. Residues 131–135 and Ile-219 contribute to the NADP(+) site; that span reads GAGGV. Tyr-221 lines the shikimate pocket. Residue Gly-242 participates in NADP(+) binding.

It belongs to the shikimate dehydrogenase family. In terms of assembly, homodimer.

It catalyses the reaction shikimate + NADP(+) = 3-dehydroshikimate + NADPH + H(+). It functions in the pathway metabolic intermediate biosynthesis; chorismate biosynthesis; chorismate from D-erythrose 4-phosphate and phosphoenolpyruvate: step 4/7. In terms of biological role, involved in the biosynthesis of the chorismate, which leads to the biosynthesis of aromatic amino acids. Catalyzes the reversible NADPH linked reduction of 3-dehydroshikimate (DHSA) to yield shikimate (SA). The chain is Shikimate dehydrogenase (NADP(+)) from Pelobacter propionicus (strain DSM 2379 / NBRC 103807 / OttBd1).